A 144-amino-acid chain; its full sequence is MKKVAGLVKLQLPAGKATPAPPVGPALGQYGANIMEFTKAFNAQTADKGDAIIPVEITIYADRSFTFITKTPPMSYLIRKAAGLQKGSATPNKAKVGKLNWEQVLEIARTKMPDLNAGSVEAAANTVAGTARSMGVTIEGAPHA.

This sequence belongs to the universal ribosomal protein uL11 family. In terms of assembly, part of the ribosomal stalk of the 50S ribosomal subunit. Interacts with L10 and the large rRNA to form the base of the stalk. L10 forms an elongated spine to which L12 dimers bind in a sequential fashion forming a multimeric L10(L12)X complex. In terms of processing, one or more lysine residues are methylated.

Functionally, forms part of the ribosomal stalk which helps the ribosome interact with GTP-bound translation factors. The sequence is that of Large ribosomal subunit protein uL11 from Deinococcus geothermalis (strain DSM 11300 / CIP 105573 / AG-3a).